We begin with the raw amino-acid sequence, 699 residues long: Putative inactive kinesin-like protein KIN-7B (699 aa).

The 170-residue stretch at 1-170 folds into the Kinesin motor domain; it reads MRAIQKKSLC…LLFGSCAKEV (170 aa). A coiled-coil region spans residues 179–247; sequence VMSDKALVKH…QSRLQDLLQS (69 aa). The interval 249–345 is disordered; that stretch reads GDHDLNRQVQ…VNSRHSRPSG (97 aa). The segment covering 264–275 has biased composition (low complexity); the sequence is RSPPSVGMPPSV. Basic and acidic residues predominate over residues 276–298; it reads SRDDSSQVSHDDSDLYKEVRCIE. Over residues 313–338 the composition is skewed to polar residues; it reads GESSSPQDSNMNSGLHGNDSNASVNS.

The protein belongs to the TRAFAC class myosin-kinesin ATPase superfamily. Kinesin family. KIN-7 subfamily.

The chain is Putative inactive kinesin-like protein KIN-7B from Oryza sativa subsp. japonica (Rice).